A 138-amino-acid chain; its full sequence is Putative transcriptional regulatory protein NedR (138 aa).

The segment at 1 to 25 (MCWGRSWTFGRSSSKGWRPTSSASS) is disordered. Polar residues predominate over residues 9-25 (FGRSSSKGWRPTSSASS).

Its function is as follows. May serve as a transcriptional regulator. In Micromonospora viridifaciens, this protein is Putative transcriptional regulatory protein NedR (nedR).